Here is a 307-residue protein sequence, read N- to C-terminus: Malonyl-[acyl-carrier protein] O-methyltransferase (307 aa).

It belongs to the methyltransferase superfamily.

It catalyses the reaction malonyl-[ACP] + S-adenosyl-L-methionine = malonyl-[ACP] methyl ester + S-adenosyl-L-homocysteine. Its pathway is cofactor biosynthesis; biotin biosynthesis. Converts the free carboxyl group of a malonyl-thioester to its methyl ester by transfer of a methyl group from S-adenosyl-L-methionine (SAM). It allows to synthesize pimeloyl-ACP via the fatty acid synthetic pathway. The chain is Malonyl-[acyl-carrier protein] O-methyltransferase from Nitrosospira multiformis (strain ATCC 25196 / NCIMB 11849 / C 71).